Here is a 134-residue protein sequence, read N- to C-terminus: D-ribose pyranase (134 aa).

H20 serves as the catalytic Proton donor. Substrate contacts are provided by residues D28, H101, and Y123–N125.

It belongs to the RbsD / FucU family. RbsD subfamily. As to quaternary structure, homodecamer.

It is found in the cytoplasm. It catalyses the reaction beta-D-ribopyranose = beta-D-ribofuranose. Its pathway is carbohydrate metabolism; D-ribose degradation; D-ribose 5-phosphate from beta-D-ribopyranose: step 1/2. Catalyzes the interconversion of beta-pyran and beta-furan forms of D-ribose. This chain is D-ribose pyranase, found in Pseudomonas fluorescens (strain ATCC BAA-477 / NRRL B-23932 / Pf-5).